The sequence spans 507 residues: MCRRNVILVFCASFALFFTFIIFGRYPGGRFAVLYENATGPSETRPLKAFISSSYFYPTSKSLGDNALALVMSVNLVQTPSFLTPYFQEIVISAENATSSAVVSTPFFRIIPHEQCQIMTIFATAQLLPNVKRIQMVSHDGLTDIPFSPPSAIKRDVVMCIAPLFVSEQWQNFLFAVHIYKKYGGFMNLYLISTINTFFAVMKEYEKEGYMKVQPWPKVNFPGVPMDIADTHGQIEFRSQTAAQTDCLLQYKESAQYLAFLDLDDVLIPRIAPTYIEEFQRIIKGKKPLAYFLYHKENYEAFVTPNSSQFSLKNMFGSLKCRNFRETGKSVIDPQNANYTWLHYPPVLVNGLEKYEVEENVITHLKTINWVEDEVKTGNGTIIEPMYYDNSSATIISSKDIKDIEDDLQRMRNKPEIKKLFAELPKIRYYSDLVLKCYNEKFYDYFYSGRYEKITCPGPQYCDFKQHPDITCMRVNATHIERETLSPVTYYYAKDPYFTDKMGCYAH.

Residues 6-26 (VILVFCASFALFFTFIIFGRY) form a helical membrane-spanning segment. Residues 155–444 (RDVVMCIAPL…LKCYNEKFYD (290 aa)) form the GT92 domain.

The protein belongs to the glycosyltransferase 92 family.

The protein resides in the membrane. The chain is Glycosyltransferase family 92 protein C33H5.2 from Caenorhabditis elegans.